A 387-amino-acid polypeptide reads, in one-letter code: MTVSELNLKVKALLESYFENIILSGEISKITLHGSGHWYFDLKDEKSSISCAMFKGANLKVGFKPAVGDFLELCGSVSLYAESGRYQFIATSMKKAGFGDLEAQFLALKERLQKEGLFDPRFKKSLPKFPKKVGIITSKTSAALQDMLKLIHQKEYFLAKIYIFDALTQGNNAPFSLIQALRKADDMDLDVLIIARGGGSREDLFCFNDENLAREIFKAKTPIISAIGHEIDYVISDFVSDFRAPTPSAAIDTLFYSKLDIEQSLDLMEEKLIQLWNHKMQNYENLLLNLSKFFKFNSLPKIIDEKIKQSHNIEKQLNHLLANQMRYNELKLDKLQNAYLQHENFFNKSKKFICIRKNGKIANLEDLKSDDIVILSSQISQKEAKIL.

This sequence belongs to the XseA family. As to quaternary structure, heterooligomer composed of large and small subunits.

It localises to the cytoplasm. The enzyme catalyses Exonucleolytic cleavage in either 5'- to 3'- or 3'- to 5'-direction to yield nucleoside 5'-phosphates.. Functionally, bidirectionally degrades single-stranded DNA into large acid-insoluble oligonucleotides, which are then degraded further into small acid-soluble oligonucleotides. The sequence is that of Exodeoxyribonuclease 7 large subunit from Campylobacter jejuni subsp. doylei (strain ATCC BAA-1458 / RM4099 / 269.97).